A 145-amino-acid polypeptide reads, in one-letter code: D-aminoacyl-tRNA deacylase (145 aa).

The Gly-cisPro motif, important for rejection of L-amino acids motif lies at 137 to 138 (GP).

This sequence belongs to the DTD family. As to quaternary structure, homodimer.

It is found in the cytoplasm. The catalysed reaction is glycyl-tRNA(Ala) + H2O = tRNA(Ala) + glycine + H(+). The enzyme catalyses a D-aminoacyl-tRNA + H2O = a tRNA + a D-alpha-amino acid + H(+). In terms of biological role, an aminoacyl-tRNA editing enzyme that deacylates mischarged D-aminoacyl-tRNAs. Also deacylates mischarged glycyl-tRNA(Ala), protecting cells against glycine mischarging by AlaRS. Acts via tRNA-based rather than protein-based catalysis; rejects L-amino acids rather than detecting D-amino acids in the active site. By recycling D-aminoacyl-tRNA to D-amino acids and free tRNA molecules, this enzyme counteracts the toxicity associated with the formation of D-aminoacyl-tRNA entities in vivo and helps enforce protein L-homochirality. This Dichelobacter nodosus (strain VCS1703A) protein is D-aminoacyl-tRNA deacylase.